A 113-amino-acid chain; its full sequence is Molt-inhibiting hormone (113 aa).

An N-terminal signal peptide occupies residues 1–35; the sequence is MMSLAHSKFSCQRTRLLAVVLLAALWSSSLQQAAA. Intrachain disulfides connect Cys42/Cys79, Cys59/Cys75, and Cys62/Cys88.

It belongs to the arthropod CHH/MIH/GIH/VIH hormone family.

Its subcellular location is the secreted. In terms of biological role, inhibits Y-organs where molting hormone (ecdysteroid) is secreted. A molting cycle is initiated when MIH secretion diminishes or stops. This is Molt-inhibiting hormone from Callinectes sapidus (Blue crab).